A 343-amino-acid polypeptide reads, in one-letter code: Heat-inducible transcription repressor HrcA (343 aa).

This sequence belongs to the HrcA family.

In terms of biological role, negative regulator of class I heat shock genes (grpE-dnaK-dnaJ and groELS operons). Prevents heat-shock induction of these operons. The polypeptide is Heat-inducible transcription repressor HrcA (Mycobacterium avium (strain 104)).